A 140-amino-acid chain; its full sequence is Con-Ins Im2 (140 aa).

The signal sequence occupies residues 1-29 (MALTWPSSPPVLLTLLLSLLALQLCAVYG). Cystine bridges form between Cys-35–Cys-123, Cys-50–Cys-126, Cys-62–Cys-139, and Cys-125–Cys-130. The propeptide at 64 to 110 (PRGYVSNWFTKRSAPNKPAETFVDQNLRGVLLNKREALSYLRPREPR) is c peptide. Residue Glu-134 is modified to 4-carboxyglutamate; partial.

It belongs to the insulin family. As to quaternary structure, heterodimer of A and B chains; disulfide-linked. In terms of tissue distribution, expressed by the venom gland.

The protein resides in the secreted. This venom insulin facilitates prey capture by rapidly inducing hypoglycemic shock. Intraperitoneal injection of this peptide into zebrafish lowers blood glucose with the same potency than human insulin. In vivo, when applied to water, this peptide reduces overall locomotor activity of zebrafish larvae, observed as a significant decrease in the percentage of time spent swimming and movement frequency. This is Con-Ins Im2 from Conus imperialis (Imperial cone).